Here is a 623-residue protein sequence, read N- to C-terminus: Putative pentatricopeptide repeat-containing protein At3g11460, mitochondrial (623 aa).

The transit peptide at 1 to 35 (MIVVTSFVRNSAVAAVASTPWNVRLRELAYQSLFS) directs the protein to the mitochondrion. PPR repeat units follow at residues 17-51 (ASTPWNVRLRELAYQSLFSESISLYRSMLRSGSSP), 52-86 (DAFSFPFILKSCASLSLPVSGQQLHCHVTKGGCET), 87-117 (EPFVLTALISMYCKCGLVADARKVFEENPQS), 120-154 (LSVCYNALISGYTANSKVTDAAYMFRRMKETGVSV), 155-189 (DSVTMLGLVPLCTVPEYLWLGRSLHGQCVKGGLDS), 190-220 (EVAVLNSFITMYMKCGSVEAGRRLFDEMPVK), 221-255 (GLITWNAVISGYSQNGLAYDVLELYEQMKSSGVCP), 256-290 (DPFTLVSVLSSCAHLGAKKIGHEVGKLVESNGFVP), 291-321 (NVFVSNASISMYARCGNLAKARAVFDIMPVK), 322-356 (SLVSWTAMIGCYGMHGMGEIGLMLFDDMIKRGIRP), 357-387 (DGAVFVMVLSACSHSGLTDKGLELFRAMKRE), and 393-423 (GPEHYSCLVDLLGRAGRLDEAMEFIESMPVE). The type E motif stretch occupies residues 428-503 (VWGALLGACK…KPGYSYVEHK (76 aa)). Positions 504–535 (GRVHLFLAGDRSHEQTEEVHRMLDELETSVME) are type E(+) motif. Residues 536-623 (LAGNMDCDRG…DGVCSCKDYW (88 aa)) form a type DYW motif region.

This sequence belongs to the PPR family. PCMP-H subfamily. As to quaternary structure, interacts with MORF8/RIP1.

It localises to the mitochondrion. Its function is as follows. Involved in C-to-U editing of mitochondrial RNA. Required specifically for editing the mitochondrial NAD2 transcript. The polypeptide is Putative pentatricopeptide repeat-containing protein At3g11460, mitochondrial (PCMP-H52) (Arabidopsis thaliana (Mouse-ear cress)).